Consider the following 262-residue polypeptide: MSHISLNICKDIFCGFFDSVRIDIAIKKLYNDQKLQKKIIKIAKFNTIMYLVPYIITYTVLNTFDYDLFSIINIVYLFVNVISGLFHLLYFIDLIDIVCVYTKKLNRPISKLDSIGLAIVSFVYQLSMYIIMELIDMMLYKKLDVVSYLIKFIILTLYHSFCCFNNLWHYKNIDIHHRISLHEKLWAYYLGYGTIASLMYIYSNHPLMIYTYNIYMSILIILPFMIKTKYPKKQAYPSINLKIFSIIVGYFNYAIKLINNSN.

The next 7 membrane-spanning stretches (helical) occupy residues Ile-42 to Asn-62, Ile-71 to Phe-91, Ile-115 to Ile-135, Val-145 to Asn-165, Leu-185 to His-205, Pro-206 to Ile-226, and Ala-235 to Ile-255.

The protein resides in the membrane. This is an uncharacterized protein from Acanthamoeba polyphaga mimivirus (APMV).